Consider the following 475-residue polypeptide: Ribulose bisphosphate carboxylase large chain (475 aa).

The propeptide occupies 1–2; the sequence is MS. Pro3 is subject to N-acetylproline. Residue Lys14 is modified to N6,N6,N6-trimethyllysine. 2 residues coordinate substrate: Asn123 and Thr173. Residue Lys175 is the Proton acceptor of the active site. Lys177 is a binding site for substrate. Lys201, Asp203, and Glu204 together coordinate Mg(2+). Position 201 is an N6-carboxylysine (Lys201). The Proton acceptor role is filled by His294. Arg295, His327, and Ser379 together coordinate substrate.

This sequence belongs to the RuBisCO large chain family. Type I subfamily. Heterohexadecamer of 8 large chains and 8 small chains. Mg(2+) is required as a cofactor.

The protein resides in the plastid. It is found in the chloroplast. It catalyses the reaction 2 (2R)-3-phosphoglycerate + 2 H(+) = D-ribulose 1,5-bisphosphate + CO2 + H2O. The enzyme catalyses D-ribulose 1,5-bisphosphate + O2 = 2-phosphoglycolate + (2R)-3-phosphoglycerate + 2 H(+). Its function is as follows. RuBisCO catalyzes two reactions: the carboxylation of D-ribulose 1,5-bisphosphate, the primary event in carbon dioxide fixation, as well as the oxidative fragmentation of the pentose substrate in the photorespiration process. Both reactions occur simultaneously and in competition at the same active site. This chain is Ribulose bisphosphate carboxylase large chain, found in Nymphaea alba (White water-lily).